We begin with the raw amino-acid sequence, 183 residues long: ATP synthase subunit b, chloroplastic (183 aa).

The helical transmembrane segment at leucine 27 to leucine 49 threads the bilayer.

The protein belongs to the ATPase B chain family. In terms of assembly, F-type ATPases have 2 components, F(1) - the catalytic core - and F(0) - the membrane proton channel. F(1) has five subunits: alpha(3), beta(3), gamma(1), delta(1), epsilon(1). F(0) has four main subunits: a(1), b(1), b'(1) and c(10-14). The alpha and beta chains form an alternating ring which encloses part of the gamma chain. F(1) is attached to F(0) by a central stalk formed by the gamma and epsilon chains, while a peripheral stalk is formed by the delta, b and b' chains.

The protein resides in the plastid. Its subcellular location is the chloroplast thylakoid membrane. F(1)F(0) ATP synthase produces ATP from ADP in the presence of a proton or sodium gradient. F-type ATPases consist of two structural domains, F(1) containing the extramembraneous catalytic core and F(0) containing the membrane proton channel, linked together by a central stalk and a peripheral stalk. During catalysis, ATP synthesis in the catalytic domain of F(1) is coupled via a rotary mechanism of the central stalk subunits to proton translocation. In terms of biological role, component of the F(0) channel, it forms part of the peripheral stalk, linking F(1) to F(0). This chain is ATP synthase subunit b, chloroplastic, found in Hordeum vulgare (Barley).